The chain runs to 306 residues: Probable cobalamin biosynthesis protein CobD (306 aa).

The next 5 membrane-spanning stretches (helical) occupy residues 54–74 (LFGF…AFEI), 88–108 (ISLY…IEFS), 155–175 (ITDS…PGAF), 207–227 (ILNF…APFY), and 286–306 (SLKA…ILFM).

It belongs to the CobD/CbiB family.

The protein resides in the cell membrane. It functions in the pathway cofactor biosynthesis; adenosylcobalamin biosynthesis. Converts cobyric acid to cobinamide by the addition of aminopropanol on the F carboxylic group. This chain is Probable cobalamin biosynthesis protein CobD, found in Methanococcus maripaludis (strain DSM 14266 / JCM 13030 / NBRC 101832 / S2 / LL).